We begin with the raw amino-acid sequence, 157 residues long: Ribosome maturation factor RimP (157 aa).

Belongs to the RimP family.

The protein resides in the cytoplasm. Required for maturation of 30S ribosomal subunits. In Levilactobacillus brevis (strain ATCC 367 / BCRC 12310 / CIP 105137 / JCM 1170 / LMG 11437 / NCIMB 947 / NCTC 947) (Lactobacillus brevis), this protein is Ribosome maturation factor RimP.